The primary structure comprises 1146 residues: Probable transport protein MmpL12 (1146 aa).

11 consecutive transmembrane segments (helical) span residues 25 to 45 (LIVI…LPTL), 206 to 226 (VSVL…LVPL), 254 to 274 (AIVF…VFLI), 298 to 318 (IGKV…AMVF), 330 to 350 (AIAV…PAIL), 382 to 402 (TIHL…TLLI), 826 to 846 (FIVI…LRAL), 850 to 870 (IYLI…GTLV), 883 to 903 (LPGL…MLLI), 928 to 948 (VITS…GASI), and 949 to 969 (NTMA…TFLV).

The protein belongs to the resistance-nodulation-cell division (RND) (TC 2.A.6) family. MmpL subfamily.

Its subcellular location is the cell membrane. In Mycobacterium tuberculosis (strain CDC 1551 / Oshkosh), this protein is Probable transport protein MmpL12 (mmpL12).